The following is an 82-amino-acid chain: Small ribosomal subunit protein bS16 (82 aa).

Belongs to the bacterial ribosomal protein bS16 family.

This is Small ribosomal subunit protein bS16 from Crocosphaera subtropica (strain ATCC 51142 / BH68) (Cyanothece sp. (strain ATCC 51142)).